We begin with the raw amino-acid sequence, 179 residues long: Large ribosomal subunit protein bL9 (179 aa).

The tract at residues K155 to E179 is disordered. Residues P167–E179 are compositionally biased toward acidic residues.

This sequence belongs to the bacterial ribosomal protein bL9 family.

Its function is as follows. Binds to the 23S rRNA. The polypeptide is Large ribosomal subunit protein bL9 (Porphyromonas gingivalis (strain ATCC BAA-308 / W83)).